The following is a 329-amino-acid chain: Legumin type B (329 aa).

Disordered regions lie at residues 47–79 and 97–149; these read PETQ…EDGN and EEDT…GRNG. A compositionally biased stretch (basic and acidic residues) spans 99 to 112; the sequence is DTAKRLRSPRDKRN. The span at 129–138 shows a compositional bias: acidic residues; sequence QQEEEEEEEE. A Cupin type-1 domain is found at 161–308; sequence ENIAQPARAD…AFGLRQRQVT (148 aa).

This sequence belongs to the 11S seed storage protein (globulins) family. As to quaternary structure, hexamer; each subunit is composed of an acidic and a basic chain derived from a single precursor and linked by a disulfide bond.

This protein found in the seeds of many leguminous and non-leguminous plants is the source of sulfur-containing amino acids in seed meals. The chain is Legumin type B (LEB6) from Vicia faba (Broad bean).